An 844-amino-acid chain; its full sequence is Translation initiation factor IF-2 (844 aa).

A compositionally biased stretch (basic and acidic residues) spans 1–11; it reads MTEDVKADAPK. Disordered stretches follow at residues 1–48 and 79–249; these read MTED…VKTD and RLEA…GTAL. Positions 21–30 are enriched in low complexity; the sequence is TTVSSTTTGG. A compositionally biased stretch (basic and acidic residues) spans 79–161; sequence RLEAEKAATK…AAEEAKRYAE (83 aa). A compositionally biased stretch (acidic residues) spans 162 to 175; the sequence is ADDSDNESSSEDYS. Residues 200–210 show a composition bias toward basic residues; that stretch reads RGKNKVAKAKK. Basic and acidic residues predominate over residues 211–237; sequence GGRDDENSKNSKNERESNRKNQKDAKF. Residues 343-513 form the tr-type G domain; that stretch reads TRAPVVTIMG…LLQSEVLELT (171 aa). The G1 stretch occupies residues 352–359; sequence GHVDHGKT. GTP is bound at residue 352 to 359; it reads GHVDHGKT. Residues 377 to 381 form a G2 region; that stretch reads GITQH. The tract at residues 399–402 is G3; sequence DTPG. GTP is bound by residues 399–403 and 453–456; these read DTPGH and NKID. The segment at 453–456 is G4; the sequence is NKID. The G5 stretch occupies residues 489–491; the sequence is SAK.

The protein belongs to the TRAFAC class translation factor GTPase superfamily. Classic translation factor GTPase family. IF-2 subfamily.

Its subcellular location is the cytoplasm. Its function is as follows. One of the essential components for the initiation of protein synthesis. Protects formylmethionyl-tRNA from spontaneous hydrolysis and promotes its binding to the 30S ribosomal subunits. Also involved in the hydrolysis of GTP during the formation of the 70S ribosomal complex. This chain is Translation initiation factor IF-2, found in Haemophilus influenzae (strain 86-028NP).